The chain runs to 372 residues: Isoliquiritigenin 2'-O-methyltransferase (372 aa).

Gly217, Asp240, Asp260, Met261, and Lys274 together coordinate S-adenosyl-L-methionine. The active-site Proton acceptor is the His278.

Belongs to the class I-like SAM-binding methyltransferase superfamily. Cation-independent O-methyltransferase family. COMT subfamily. Monomer. Homodimer. Roots (at protein level). Expressed mainly in roots, and to a lesser extent in root nodules. In the roots, expression is not detected in the root tip or the cells immediately behind the tip, but is detected in tissues starting 1.5-2.0 mm distal to the root tip. Detected in the epidermal and cortical cells of 2 day old roots, with lower levels in vascular tissue.

It carries out the reaction isoliquiritigenin + S-adenosyl-L-methionine = 2'-O-methylisoliquiritigenin + S-adenosyl-L-homocysteine + H(+). The enzyme catalyses licodione + S-adenosyl-L-methionine = 2'-O-methyllicodione + S-adenosyl-L-homocysteine + H(+). Its activity is regulated as follows. Inhibited by 1 mM Co(2+), Cu(2+), Zn(2+) or Fe(2+). Non-competitively inhibited by S-adenosyl-L-homocysteine. Competitively inhibited by 2'-O-methylisoliquiritigenin. Methylates the 2'-hydroxyl of isoliquiritigenin and licodione. Does not methylate narigenin chalcone, caffeic acid or daidzein. Involved in the root nodulation initiation by promoting the biosynthesis of nod-inducing molecules. This Medicago sativa (Alfalfa) protein is Isoliquiritigenin 2'-O-methyltransferase.